The sequence spans 1681 residues: Meiosis regulator and mRNA stability factor 1 (1681 aa).

Residues 340–477 form the NYN domain; sequence IGVFWDIENC…ALLHHAHELI (138 aa). Disordered regions lie at residues 576–595 and 638–717; these read VNETKNSCVSNEKAKSPKKV and QMQS…DVVF. The span at 638–647 shows a compositional bias: polar residues; that stretch reads QMQSKSNKTS. The span at 648-658 shows a compositional bias: basic and acidic residues; sequence QQEKDKKRNGD. Over residues 659–690 the composition is skewed to polar residues; that stretch reads KQGTLSQSSPLCTNQMLQTARNVGTDNTASKS. The segment covering 692 to 715 has biased composition (basic and acidic residues); that stretch reads QKRDDTTRKSNADSQKEQKNKEDV. Residues 779–858 form the RRM domain; that stretch reads ADIQIGNLDY…KRIQVSLATG (80 aa). HTH OST-type domains are found at residues 863-937, 991-1067, 1087-1161, 1163-1238, 1247-1321, 1323-1398, 1399-1472, and 1474-1548; these read SLSL…SPMG, SLKT…HNKP, QLIQ…LTHR, QVKR…IPKR, RTKQ…LTEM, RIKA…INRK, SLRS…SVQL, and SLYV…LKND. Polar residues predominate over residues 1637–1648; it reads EPSTQNICPQES. The interval 1637-1662 is disordered; that stretch reads EPSTQNICPQESKSTKELPESPVKRQ. The segment covering 1649–1659 has biased composition (basic and acidic residues); it reads KSTKELPESPV.

The protein localises to the peroxisome. Functionally, essential regulator of oogenesis required for female meiotic progression to repress transposable elements and preventing their mobilization, which is essential for the germline integrity. The chain is Meiosis regulator and mRNA stability factor 1 from Xenopus tropicalis (Western clawed frog).